Consider the following 485-residue polypeptide: Kynureninase 1 (485 aa).

Pyridoxal 5'-phosphate is bound by residues leucine 155, threonine 156, 183–186, aspartate 267, histidine 270, and tyrosine 292; that span reads FPSD. Residue lysine 293 is modified to N6-(pyridoxal phosphate)lysine. Residues tryptophan 330 and asparagine 358 each coordinate pyridoxal 5'-phosphate.

Belongs to the kynureninase family. In terms of assembly, homodimer. Requires pyridoxal 5'-phosphate as cofactor.

The protein resides in the cytoplasm. It catalyses the reaction L-kynurenine + H2O = anthranilate + L-alanine + H(+). The catalysed reaction is 3-hydroxy-L-kynurenine + H2O = 3-hydroxyanthranilate + L-alanine + H(+). It functions in the pathway amino-acid degradation; L-kynurenine degradation; L-alanine and anthranilate from L-kynurenine: step 1/1. The protein operates within cofactor biosynthesis; NAD(+) biosynthesis; quinolinate from L-kynurenine: step 2/3. In terms of biological role, catalyzes the cleavage of L-kynurenine (L-Kyn) and L-3-hydroxykynurenine (L-3OHKyn) into anthranilic acid (AA) and 3-hydroxyanthranilic acid (3-OHAA), respectively. This chain is Kynureninase 1 (kyn-1), found in Neurospora crassa (strain ATCC 24698 / 74-OR23-1A / CBS 708.71 / DSM 1257 / FGSC 987).